A 130-amino-acid chain; its full sequence is Small ribosomal subunit protein uS8 (130 aa).

The protein belongs to the universal ribosomal protein uS8 family. Part of the 30S ribosomal subunit. Contacts proteins S5 and S12.

In terms of biological role, one of the primary rRNA binding proteins, it binds directly to 16S rRNA central domain where it helps coordinate assembly of the platform of the 30S subunit. The polypeptide is Small ribosomal subunit protein uS8 (Shewanella halifaxensis (strain HAW-EB4)).